The primary structure comprises 481 residues: GTPase Der (481 aa).

EngA-type G domains lie at P47–S210 and R221–E394. GTP contacts are provided by residues G53 to S60, D100 to W104, N162 to D165, G227 to S234, D274 to I278, and N339 to D342. Positions T395–E477 constitute a KH-like domain.

The protein belongs to the TRAFAC class TrmE-Era-EngA-EngB-Septin-like GTPase superfamily. EngA (Der) GTPase family. Associates with the 50S ribosomal subunit.

Its function is as follows. GTPase that plays an essential role in the late steps of ribosome biogenesis. The sequence is that of GTPase Der from Leifsonia xyli subsp. xyli (strain CTCB07).